We begin with the raw amino-acid sequence, 290 residues long: Acetyl-coenzyme A carboxylase carboxyl transferase subunit beta (290 aa).

In terms of domain architecture, CoA carboxyltransferase N-terminal spans 28–290; that stretch reads VMTKCPQCKK…KGGEEGWWRN (263 aa). Zn(2+) contacts are provided by C32, C35, C51, and C54. The C4-type zinc-finger motif lies at 32–54; that stretch reads CPQCKKIMYTKELIKNLRVCLSC.

The protein belongs to the AccD/PCCB family. As to quaternary structure, acetyl-CoA carboxylase is a heterohexamer composed of biotin carboxyl carrier protein (AccB), biotin carboxylase (AccC) and two subunits each of ACCase subunit alpha (AccA) and ACCase subunit beta (AccD). Zn(2+) serves as cofactor.

Its subcellular location is the cytoplasm. It carries out the reaction N(6)-carboxybiotinyl-L-lysyl-[protein] + acetyl-CoA = N(6)-biotinyl-L-lysyl-[protein] + malonyl-CoA. The protein operates within lipid metabolism; malonyl-CoA biosynthesis; malonyl-CoA from acetyl-CoA: step 1/1. Functionally, component of the acetyl coenzyme A carboxylase (ACC) complex. Biotin carboxylase (BC) catalyzes the carboxylation of biotin on its carrier protein (BCCP) and then the CO(2) group is transferred by the transcarboxylase to acetyl-CoA to form malonyl-CoA. The chain is Acetyl-coenzyme A carboxylase carboxyl transferase subunit beta from Geobacillus kaustophilus (strain HTA426).